Reading from the N-terminus, the 256-residue chain is Trans-aconitate 2-methyltransferase (256 aa).

This sequence belongs to the methyltransferase superfamily. Tam family.

The protein resides in the cytoplasm. It carries out the reaction trans-aconitate + S-adenosyl-L-methionine = (E)-3-(methoxycarbonyl)pent-2-enedioate + S-adenosyl-L-homocysteine. Its function is as follows. Catalyzes the S-adenosylmethionine monomethyl esterification of trans-aconitate. This Rhizobium etli (strain ATCC 51251 / DSM 11541 / JCM 21823 / NBRC 15573 / CFN 42) protein is Trans-aconitate 2-methyltransferase.